Here is a 932-residue protein sequence, read N- to C-terminus: Lipoxygenase 2.2, chloroplastic (932 aa).

In terms of domain architecture, PLAT spans 79–219 (MKATVSVHMK…CSPDKRTFFP (141 aa)). Residues 223 to 932 (SYIPSQTPKG…EMGIPNSISI (710 aa)) form the Lipoxygenase domain. The span at 270–284 (PESKRPVLGGKEHPY) shows a compositional bias: basic and acidic residues. The interval 270-311 (PESKRPVLGGKEHPYPRRCRTGRPRSKTDPSSEEESHKKGEM) is disordered. The span at 285-294 (PRRCRTGRPR) shows a compositional bias: basic residues. Residues 295 to 311 (SKTDPSSEEESHKKGEM) show a composition bias toward basic and acidic residues. Fe cation contacts are provided by His-588, His-593, His-778, Asn-782, and Ile-932.

It belongs to the lipoxygenase family. Requires Fe cation as cofactor.

The protein localises to the plastid. Its subcellular location is the chloroplast. It carries out the reaction (9Z,12Z)-octadecadienoate + O2 = (13S)-hydroperoxy-(9Z,11E)-octadecadienoate. The catalysed reaction is (9Z,12Z,15Z)-octadecatrienoate + O2 = (13S)-hydroperoxy-(9Z,11E,15Z)-octadecatrienoate. It participates in lipid metabolism; oxylipin biosynthesis. Functionally, plant lipoxygenase may be involved in a number of diverse aspects of plant physiology including growth and development, pest resistance, and senescence or responses to wounding. This enzyme exhibits linoleate 13-lipoxygenase activity. The sequence is that of Lipoxygenase 2.2, chloroplastic (LOX2.2) from Hordeum vulgare (Barley).